A 196-amino-acid polypeptide reads, in one-letter code: Ribonuclease HII (196 aa).

One can recognise an RNase H type-2 domain in the interval 15–196 (FILAGIDEAG…RLSFTKALYK (182 aa)). Residues aspartate 21, glutamate 22, and aspartate 112 each coordinate a divalent metal cation.

Belongs to the RNase HII family. Mn(2+) serves as cofactor. The cofactor is Mg(2+).

The protein localises to the cytoplasm. The enzyme catalyses Endonucleolytic cleavage to 5'-phosphomonoester.. Its function is as follows. Endonuclease that specifically degrades the RNA of RNA-DNA hybrids. The sequence is that of Ribonuclease HII from Rickettsia bellii (strain OSU 85-389).